A 473-amino-acid polypeptide reads, in one-letter code: Lactate utilization protein B 2 (473 aa).

4Fe-4S ferredoxin-type domains are found at residues 302 to 332 (GSEF…GHSY) and 351 to 380 (YDDY…LHDL). The [4Fe-4S] cluster site is built by C311, C314, C317, C321, C364, C367, and C371.

This sequence belongs to the LutB/YkgF family.

Its function is as follows. Is involved in L-lactate degradation and allows cells to grow with lactate as the sole carbon source. Has probably a role as an electron transporter during oxidation of L-lactate. The polypeptide is Lactate utilization protein B 2 (Bacillus mycoides (strain KBAB4) (Bacillus weihenstephanensis)).